A 342-amino-acid polypeptide reads, in one-letter code: Anthranilate phosphoribosyltransferase (342 aa).

5-phospho-alpha-D-ribose 1-diphosphate-binding positions include G81, 84-85 (GD), T89, 91-94 (NIST), 109-117 (KHGNRALSS), and T121. An anthranilate-binding site is contributed by G81. S93 is a binding site for Mg(2+). Residue N112 participates in anthranilate binding. R167 lines the anthranilate pocket. Mg(2+)-binding residues include D225 and E226.

Belongs to the anthranilate phosphoribosyltransferase family. In terms of assembly, homodimer. Requires Mg(2+) as cofactor.

It catalyses the reaction N-(5-phospho-beta-D-ribosyl)anthranilate + diphosphate = 5-phospho-alpha-D-ribose 1-diphosphate + anthranilate. It functions in the pathway amino-acid biosynthesis; L-tryptophan biosynthesis; L-tryptophan from chorismate: step 2/5. Catalyzes the transfer of the phosphoribosyl group of 5-phosphorylribose-1-pyrophosphate (PRPP) to anthranilate to yield N-(5'-phosphoribosyl)-anthranilate (PRA). In Agrobacterium fabrum (strain C58 / ATCC 33970) (Agrobacterium tumefaciens (strain C58)), this protein is Anthranilate phosphoribosyltransferase.